The primary structure comprises 367 residues: tRNA-specific 2-thiouridylase MnmA (367 aa).

ATP is bound by residues 13–20 (GLSGGVDS) and methionine 39. The interaction with target base in tRNA stretch occupies residues 99-101 (NPD). Catalysis depends on cysteine 104, which acts as the Nucleophile. Cysteine 104 and cysteine 200 are joined by a disulfide. Glycine 128 is a binding site for ATP. The interaction with tRNA stretch occupies residues 150–152 (KDQ). Cysteine 200 (cysteine persulfide intermediate) is an active-site residue. Residues 307 to 308 (RY) are interaction with tRNA.

The protein belongs to the MnmA/TRMU family.

Its subcellular location is the cytoplasm. The catalysed reaction is S-sulfanyl-L-cysteinyl-[protein] + uridine(34) in tRNA + AH2 + ATP = 2-thiouridine(34) in tRNA + L-cysteinyl-[protein] + A + AMP + diphosphate + H(+). In terms of biological role, catalyzes the 2-thiolation of uridine at the wobble position (U34) of tRNA, leading to the formation of s(2)U34. This Neisseria meningitidis serogroup A / serotype 4A (strain DSM 15465 / Z2491) protein is tRNA-specific 2-thiouridylase MnmA.